The chain runs to 362 residues: Cobalt-precorrin-5B C(1)-methyltransferase (362 aa).

Belongs to the CbiD family.

The catalysed reaction is Co-precorrin-5B + S-adenosyl-L-methionine = Co-precorrin-6A + S-adenosyl-L-homocysteine. Its pathway is cofactor biosynthesis; adenosylcobalamin biosynthesis; cob(II)yrinate a,c-diamide from sirohydrochlorin (anaerobic route): step 6/10. Its function is as follows. Catalyzes the methylation of C-1 in cobalt-precorrin-5B to form cobalt-precorrin-6A. This is Cobalt-precorrin-5B C(1)-methyltransferase from Desulfotalea psychrophila (strain LSv54 / DSM 12343).